The following is a 195-amino-acid chain: Nucleoside triphosphate pyrophosphatase (195 aa).

Aspartate 70 functions as the Proton acceptor in the catalytic mechanism.

It belongs to the Maf family. A divalent metal cation is required as a cofactor.

Its subcellular location is the cytoplasm. The catalysed reaction is a ribonucleoside 5'-triphosphate + H2O = a ribonucleoside 5'-phosphate + diphosphate + H(+). The enzyme catalyses a 2'-deoxyribonucleoside 5'-triphosphate + H2O = a 2'-deoxyribonucleoside 5'-phosphate + diphosphate + H(+). In terms of biological role, nucleoside triphosphate pyrophosphatase. May have a dual role in cell division arrest and in preventing the incorporation of modified nucleotides into cellular nucleic acids. The chain is Nucleoside triphosphate pyrophosphatase from Microcystis aeruginosa (strain NIES-843 / IAM M-2473).